The sequence spans 339 residues: Anthranilate phosphoribosyltransferase (339 aa).

Residues Gly79, 82 to 83 (GD), Ser87, 89 to 92 (NIST), 107 to 115 (KHGNRSVSS), and Ser119 each bind 5-phospho-alpha-D-ribose 1-diphosphate. Anthranilate is bound at residue Gly79. A Mg(2+)-binding site is contributed by Ser91. Residue Asn110 participates in anthranilate binding. Arg165 is a binding site for anthranilate. Positions 224 and 225 each coordinate Mg(2+).

It belongs to the anthranilate phosphoribosyltransferase family. As to quaternary structure, homodimer. Mg(2+) is required as a cofactor.

It catalyses the reaction N-(5-phospho-beta-D-ribosyl)anthranilate + diphosphate = 5-phospho-alpha-D-ribose 1-diphosphate + anthranilate. Its pathway is amino-acid biosynthesis; L-tryptophan biosynthesis; L-tryptophan from chorismate: step 2/5. Its function is as follows. Catalyzes the transfer of the phosphoribosyl group of 5-phosphorylribose-1-pyrophosphate (PRPP) to anthranilate to yield N-(5'-phosphoribosyl)-anthranilate (PRA). In Exiguobacterium sibiricum (strain DSM 17290 / CCUG 55495 / CIP 109462 / JCM 13490 / 255-15), this protein is Anthranilate phosphoribosyltransferase.